The following is a 454-amino-acid chain: Light-independent protochlorophyllide reductase subunit N (454 aa).

Positions 22, 47, and 107 each coordinate [4Fe-4S] cluster.

Belongs to the BchN/ChlN family. As to quaternary structure, protochlorophyllide reductase is composed of three subunits; ChlL, ChlN and ChlB. Forms a heterotetramer of two ChlB and two ChlN subunits. [4Fe-4S] cluster serves as cofactor.

The protein resides in the plastid. It is found in the chloroplast. It catalyses the reaction chlorophyllide a + oxidized 2[4Fe-4S]-[ferredoxin] + 2 ADP + 2 phosphate = protochlorophyllide a + reduced 2[4Fe-4S]-[ferredoxin] + 2 ATP + 2 H2O. It functions in the pathway porphyrin-containing compound metabolism; chlorophyll biosynthesis (light-independent). In terms of biological role, component of the dark-operative protochlorophyllide reductase (DPOR) that uses Mg-ATP and reduced ferredoxin to reduce ring D of protochlorophyllide (Pchlide) to form chlorophyllide a (Chlide). This reaction is light-independent. The NB-protein (ChlN-ChlB) is the catalytic component of the complex. The sequence is that of Light-independent protochlorophyllide reductase subunit N from Cycas taitungensis (Prince sago).